The sequence spans 120 residues: NADH dehydrogenase [ubiquinone] 1 subunit C2 (120 aa).

Residues 57–76 form a helical membrane-spanning segment; that stretch reads GLHRQLLFVTSFVFAGYFYL.

Belongs to the complex I NDUFC2 subunit family. As to quaternary structure, complex I is composed of 45 different subunits. Interacts with TMEM242.

The protein localises to the mitochondrion inner membrane. In terms of biological role, accessory subunit of the mitochondrial membrane respiratory chain NADH dehydrogenase (Complex I), that is believed not to be involved in catalysis but required for the complex assembly. Complex I functions in the transfer of electrons from NADH to the respiratory chain. The immediate electron acceptor for the enzyme is believed to be ubiquinone. In Mus musculus (Mouse), this protein is NADH dehydrogenase [ubiquinone] 1 subunit C2.